Reading from the N-terminus, the 557-residue chain is Urocanate hydratase (557 aa).

The tract at residues 1–20 is disordered; sequence MSNPRHNEREVRSPRGDELN. Residues 52–53, Gln130, 176–178, Glu196, Arg201, 242–243, 263–267, 273–274, and Tyr322 each bind NAD(+); these read GG, GMG, NA, QTSAH, and YL. The active site involves Cys410. Gly492 contacts NAD(+).

This sequence belongs to the urocanase family. It depends on NAD(+) as a cofactor.

It is found in the cytoplasm. It carries out the reaction 4-imidazolone-5-propanoate = trans-urocanate + H2O. The protein operates within amino-acid degradation; L-histidine degradation into L-glutamate; N-formimidoyl-L-glutamate from L-histidine: step 2/3. Catalyzes the conversion of urocanate to 4-imidazolone-5-propionate. The chain is Urocanate hydratase from Brucella melitensis biotype 1 (strain ATCC 23456 / CCUG 17765 / NCTC 10094 / 16M).